A 706-amino-acid chain; its full sequence is Coiled-coil domain-containing protein 177 (706 aa).

The span at 1-11 (MVDPVPEEEKE) shows a compositional bias: acidic residues. Disordered regions lie at residues 1 to 63 (MVDP…GGRR), 179 to 262 (ASAL…LREL), and 268 to 287 (ASAR…NPLG). Low complexity-rich tracts occupy residues 28 to 49 (PPDA…AAAP) and 179 to 209 (ASAL…RRTS). A compositionally biased stretch (pro residues) spans 210 to 221 (PSPPARSRPPPA). Low complexity predominate over residues 242–257 (ALSSESGASSSSYSGE). Position 310 is a phosphoserine (S310). Positions 360 to 624 (AAHGQWEQQR…QTRLEKERAQ (265 aa)) form a coiled coil. 4 disordered regions span residues 364 to 386 (QWEQ…KQRA), 398 to 425 (VEER…RSEE), 448 to 580 (DDRL…EREH), and 651 to 706 (ERSE…LDRK). A compositionally biased stretch (basic and acidic residues) spans 368–386 (QRVRAEQRREREEREKQRA). Composition is skewed to basic and acidic residues over residues 448–529 (DDRL…REGL), 548–580 (QEQR…EREH), and 651–663 (ERSE…RRSA). The span at 664 to 674 (LESARSTARAS) shows a compositional bias: low complexity. Over residues 676-706 (HVREKVREETNTRSFDRMVREAQLHASLDRK) the composition is skewed to basic and acidic residues.

The sequence is that of Coiled-coil domain-containing protein 177 (Ccdc177) from Mus musculus (Mouse).